Reading from the N-terminus, the 93-residue chain is CRISPR-associated endoribonuclease Cas2 2 (93 aa).

Asp9 serves as a coordination point for Mg(2+).

Belongs to the CRISPR-associated endoribonuclease Cas2 protein family. As to quaternary structure, homodimer, forms a heterotetramer with a Cas1 homodimer. The cofactor is Mg(2+).

In terms of biological role, CRISPR (clustered regularly interspaced short palindromic repeat), is an adaptive immune system that provides protection against mobile genetic elements (viruses, transposable elements and conjugative plasmids). CRISPR clusters contain sequences complementary to antecedent mobile elements and target invading nucleic acids. CRISPR clusters are transcribed and processed into CRISPR RNA (crRNA). Functions as a ssRNA-specific endoribonuclease. Involved in the integration of spacer DNA into the CRISPR cassette. The sequence is that of CRISPR-associated endoribonuclease Cas2 2 from Synechocystis sp. (strain ATCC 27184 / PCC 6803 / Kazusa).